A 452-amino-acid polypeptide reads, in one-letter code: MSTKSQVTRRVRTSIATPEDGVHGNNQHKGILDPHLSVLEMLDRQDGDGAGQVEEGAVMTVGKRRVERSLHHSISESWQAIKRSDYSFLSGTHEVGAMHSSVGILSSSDTSEEEAEMRPSAHGTVHLGSSLASPMRQLLVEEDNSCAEEDDCQTVTISMPSSSTSLVMPKLSLSQRLGEPQLLLVGQPARKFWLTIPKCYQKLFDVKNLGMVTRWDVGQRYLAVMVVFHDIAQAPELLDGLCEKAPCPTVIPVCQKGQKSTLAALLKRYTARKCIRVYCSPIIMSNHHEKHRLLKHLHNLCNESESGYETELTVKSKKQHRRPRKKDAGPVALRHWAIWTASFTIGIGIGCCISLMATTRFTFFSSAPLPLTAVIPAQIPSSVASDKPPHRLVPHFYMLCKTTIRQLGTSLRLFFFEKFESRTWVHIFGMDLHSDDPLASLGRLMPLDFIML.

Residues Met1 to His28 form a disordered region. The helical transmembrane segment at Trp336 to Met356 threads the bilayer.

It belongs to the ATG32 family.

It is found in the mitochondrion outer membrane. The protein localises to the vacuole membrane. Its subcellular location is the preautophagosomal structure membrane. In terms of biological role, mitophagy-specific receptor that recruits the autophagic machinery to mitochondria and regulates selective degradation of mitochondria. Mitophagy contributes to regulate mitochondrial quantity and quality by eliminating the mitochondria to a basal level to fulfill cellular energy requirements and preventing excess ROS production. Recruits ATG11 to the surface of mitochondria. Also promotes autophagy-dependent peroxisome degradation. The sequence is that of Autophagy-related protein 32 (ATG32) from Eremothecium gossypii (strain ATCC 10895 / CBS 109.51 / FGSC 9923 / NRRL Y-1056) (Yeast).